The sequence spans 276 residues: NH(3)-dependent NAD(+) synthetase (276 aa).

An ATP-binding site is contributed by 46–53 (GISGGQDS). Asp-52 contacts Mg(2+). A deamido-NAD(+)-binding site is contributed by Arg-141. ATP is bound at residue Thr-161. Glu-166 lines the Mg(2+) pocket. Deamido-NAD(+) contacts are provided by Lys-174 and Asp-181. ATP-binding residues include Lys-190 and Thr-212. A deamido-NAD(+)-binding site is contributed by 261-262 (HK).

It belongs to the NAD synthetase family. As to quaternary structure, homodimer.

The catalysed reaction is deamido-NAD(+) + NH4(+) + ATP = AMP + diphosphate + NAD(+) + H(+). Its pathway is cofactor biosynthesis; NAD(+) biosynthesis; NAD(+) from deamido-NAD(+) (ammonia route): step 1/1. Catalyzes the ATP-dependent amidation of deamido-NAD to form NAD. Uses ammonia as a nitrogen source. The chain is NH(3)-dependent NAD(+) synthetase from Limosilactobacillus fermentum (strain NBRC 3956 / LMG 18251) (Lactobacillus fermentum).